The sequence spans 381 residues: Neutral protease 2 homolog mep20 (381 aa).

The N-terminal stretch at 1-19 (MRFTALASAILPLACNVLA) is a signal peptide. A propeptide spanning residues 20-193 (LPAKTGEAPK…ASAVKPLDKR (174 aa)) is cleaved from the precursor. 2 disulfides stabilise this stretch: cysteine 199-cysteine 271 and cysteine 278-cysteine 296. Position 321 (histidine 321) interacts with Zn(2+). Residue glutamate 322 is part of the active site. Residues histidine 325 and aspartate 336 each coordinate Zn(2+).

The protein belongs to the peptidase M35 family. It depends on Zn(2+) as a cofactor.

The enzyme catalyses Preferential cleavage of bonds with hydrophobic residues in P1'. Also 3-Asn-|-Gln-4 and 8-Gly-|-Ser-9 bonds in insulin B chain.. Functionally, secreted metalloproteinase that allows assimilation of proteinaceous substrates. Shows high activities on basic nuclear substrates such as histone and protamine. The sequence is that of Neutral protease 2 homolog mep20 (mep20) from Aspergillus flavus.